A 302-amino-acid polypeptide reads, in one-letter code: Nucleotide-binding protein Strop_3101 (302 aa).

26 to 33 serves as a coordination point for ATP; the sequence is GVSGGGRS. 77–80 contributes to the GTP binding site; that stretch reads DVRS.

Belongs to the RapZ-like family.

In terms of biological role, displays ATPase and GTPase activities. This chain is Nucleotide-binding protein Strop_3101, found in Salinispora tropica (strain ATCC BAA-916 / DSM 44818 / JCM 13857 / NBRC 105044 / CNB-440).